A 199-amino-acid polypeptide reads, in one-letter code: MARYTGPAWKLSRRLGISLTETGKEIAKRPYAPGQHGNSRRKMSEYGLQLQAKQTLRHMYGVNERQFNRIFNDAGKMPGIHGENFMFLLEARLDNVVYRMGMARTRRAARQLVNHGHIQVDGARVDIPSFRVKPGQTISVREKSKNFVVIKEALEVAPATKDFVTFDAEKLEGTFVRLPERSELNDQIQEQLVVEYYSR.

In terms of domain architecture, S4 RNA-binding spans 91 to 153; that stretch reads ARLDNVVYRM…SKNFVVIKEA (63 aa).

It belongs to the universal ribosomal protein uS4 family. In terms of assembly, part of the 30S ribosomal subunit. Contacts protein S5. The interaction surface between S4 and S5 is involved in control of translational fidelity.

Functionally, one of the primary rRNA binding proteins, it binds directly to 16S rRNA where it nucleates assembly of the body of the 30S subunit. Its function is as follows. With S5 and S12 plays an important role in translational accuracy. The sequence is that of Small ribosomal subunit protein uS4 from Exiguobacterium sibiricum (strain DSM 17290 / CCUG 55495 / CIP 109462 / JCM 13490 / 255-15).